Consider the following 1184-residue polypeptide: Cartilage intermediate layer protein 1 (1184 aa).

The N-terminal stretch at 1 to 21 (MVGTKAWVFSFLVLEVTSVLG) is a signal peptide. N-linked (GlcNAc...) asparagine glycans are attached at residues asparagine 129 and asparagine 132. In terms of domain architecture, TSP type-1 spans 149–201 (ERIWSPWSPWSKCSAACGQTGVQTRTRICLAEMVSLCSEASEEGQHCMGQDCT). Disulfide bonds link cysteine 161/cysteine 195, cysteine 165/cysteine 200, cysteine 177/cysteine 185, and cysteine 330/cysteine 376. In terms of domain architecture, Ig-like C2-type spans 309 to 395 (PYMVMNPETK…KSKVAQLIVI (87 aa)). 6 N-linked (GlcNAc...) asparagine glycosylation sites follow: asparagine 346, asparagine 420, asparagine 550, asparagine 631, asparagine 1000, and asparagine 1056. The tract at residues 1136 to 1170 (TPAQSPAAGTVQGRVPSRRQQRASRGGQRQGGVVA) is disordered. The span at 1158–1170 (ASRGGQRQGGVVA) shows a compositional bias: low complexity.

In terms of assembly, monomer. Interacts with TGFB1. In terms of processing, cleaved into 2 chains possibly by a furin-like protease upon or preceding secretion. In terms of tissue distribution, specifically expressed in cartilage. Localizes in the intermediates layer of articular cartilage but neither in the superficial nor in the deepest regions. Specifically and highly expressed in intervertebral disk tissue. Expression increases with aging in hip articular cartilage. Overexpressed in articular hyaline cartilage from patients with calcium pyrophosphate dihydrate crystal deposition disease (CPPD). Expression in intervertebral disk tissue from individuals with lumbar disk disease increases as disk degeneration progresses.

It localises to the secreted. The protein localises to the extracellular space. Its subcellular location is the extracellular matrix. In terms of biological role, probably plays a role in cartilage scaffolding. May act by antagonizing TGF-beta1 (TGFB1) and IGF1 functions. Has the ability to suppress IGF1-induced proliferation and sulfated proteoglycan synthesis, and inhibits ligand-induced IGF1R autophosphorylation. May inhibit TGFB1-mediated induction of cartilage matrix genes via its interaction with TGFB1. Overexpression may lead to impair chondrocyte growth and matrix repair and indirectly promote inorganic pyrophosphate (PPi) supersaturation in aging and osteoarthritis cartilage. This is Cartilage intermediate layer protein 1 (CILP) from Homo sapiens (Human).